The primary structure comprises 287 residues: Ret finger protein-like 4A-like protein 1 (287 aa).

Residues 11 to 53 (CPVCLKDLEEAVQLKCGYACCLQCLNSLQKEPDGEGLLCRFCS) form an RING-type; degenerate zinc finger. Positions 78–276 (EPKLKSVLTM…LSICSVINPS (199 aa)) constitute a B30.2/SPRY domain.

This is Ret finger protein-like 4A-like protein 1 (RFPL4AL1) from Homo sapiens (Human).